The chain runs to 308 residues: Hydroxyacylglutathione hydrolase, mitochondrial (308 aa).

A mitochondrion-targeting transit peptide spans 1-13 (MVVGRGLLGRRSL). 4 residues coordinate Zn(2+): His102, His104, Asp106, and His107. Residue Lys116 is modified to N6-acetyllysine. His158 and Asp182 together coordinate Zn(2+). Substrate-binding positions include 191 to 193 (KFY) and 221 to 223 (HEY). Zn(2+) is bound at residue His221. At Lys229 the chain carries N6-acetyllysine; alternate. At Lys229 the chain carries N6-succinyllysine; alternate. 297–300 (RREK) is a binding site for substrate.

This sequence belongs to the metallo-beta-lactamase superfamily. Glyoxalase II family. Monomer. The cofactor is Zn(2+). Expressed in liver and kidney.

It localises to the mitochondrion matrix. Its subcellular location is the cytoplasm. The catalysed reaction is an S-(2-hydroxyacyl)glutathione + H2O = a 2-hydroxy carboxylate + glutathione + H(+). It catalyses the reaction (R)-S-lactoylglutathione + H2O = (R)-lactate + glutathione + H(+). Its pathway is secondary metabolite metabolism; methylglyoxal degradation; (R)-lactate from methylglyoxal: step 2/2. Its function is as follows. Thiolesterase that catalyzes the hydrolysis of S-D-lactoyl-glutathione to form glutathione and D-lactic acid. The polypeptide is Hydroxyacylglutathione hydrolase, mitochondrial (HAGH) (Homo sapiens (Human)).